A 134-amino-acid chain; its full sequence is MAMTDPLGDMLTRIRNGQQAKKDSVLTPASTLRVRVLDVLQREGYIRGYSEEALGAKGQHKGIRIELKYFEGQPAIRHVARVSKPGRRVYSGSKELPIVRNGLGITIVSTPRGVLSDAEAREQNVGGEVLAEVF.

The protein belongs to the universal ribosomal protein uS8 family. As to quaternary structure, part of the 30S ribosomal subunit. Contacts proteins S5 and S12.

In terms of biological role, one of the primary rRNA binding proteins, it binds directly to 16S rRNA central domain where it helps coordinate assembly of the platform of the 30S subunit. The polypeptide is Small ribosomal subunit protein uS8 (Sphingopyxis alaskensis (strain DSM 13593 / LMG 18877 / RB2256) (Sphingomonas alaskensis)).